The following is a 570-amino-acid chain: MSEKHPGPLVVEGKLTDAERMKLESNYLRGTIAEDLNDGLTGGFKGDNFLLIRFHGMYQQDDRDIRAERAEQKLEPRHAMLLRCRLPGGVITTKQWQAIDKFAGENTIYGSIRLTNRQTFQFHGILKKNVKPVHQMLHSVGLDALATANDMNRNVLCTSNPYESQLHAEAYEWAKKISEHLLPRTRAYAEIWLDQEKVATTDEEPILGQTYLPRKFKTTVVIPPQNDIDLHANDMNFVAIAENGKLVGFNLLVGGGLSIEHGNKKTYARTASEFGYLPLEHTLAVAEAVVTTQRDWGNRTDRKNAKTKYTLERVGVETFKAEVERRAGIKFEPIRPYEFTGRGDRIGWVKGIDDNWHLTLFIENGRILDYPGRPLKTGLLEIAKIHKGDFRITANQNLIITGVPESEKAKIEKIAKESGLMNAVTPQRENSMACVSFPTCPLAMAEAERFLPSFIDNIDNLMAKHGVSDEHIVMRVTGCPNGCGRAMLAEVGLVGKAPGRYNLHLGGNRIGTRIPRMYKENITEPEILASLDELIGRWAKEREAGEGFGDFTVRAGIIRPVLDPARDLWD.

Residues Cys-434, Cys-440, Cys-479, and Cys-483 each coordinate [4Fe-4S] cluster. Position 483 (Cys-483) interacts with siroheme.

This sequence belongs to the nitrite and sulfite reductase 4Fe-4S domain family. As to quaternary structure, alpha(8)-beta(8). The alpha component is a flavoprotein, the beta component is a hemoprotein. Siroheme is required as a cofactor. It depends on [4Fe-4S] cluster as a cofactor.

It catalyses the reaction hydrogen sulfide + 3 NADP(+) + 3 H2O = sulfite + 3 NADPH + 4 H(+). The protein operates within sulfur metabolism; hydrogen sulfide biosynthesis; hydrogen sulfide from sulfite (NADPH route): step 1/1. Component of the sulfite reductase complex that catalyzes the 6-electron reduction of sulfite to sulfide. This is one of several activities required for the biosynthesis of L-cysteine from sulfate. This chain is Sulfite reductase [NADPH] hemoprotein beta-component, found in Shigella sonnei (strain Ss046).